Consider the following 352-residue polypeptide: UPF0252 protein MJ1282 (352 aa).

The protein belongs to the UPF0252 family.

This is UPF0252 protein MJ1282 from Methanocaldococcus jannaschii (strain ATCC 43067 / DSM 2661 / JAL-1 / JCM 10045 / NBRC 100440) (Methanococcus jannaschii).